We begin with the raw amino-acid sequence, 298 residues long: Tyrosine recombinase XerC (298 aa).

One can recognise a Core-binding (CB) domain in the interval 1–84; sequence MNHIQEAFLN…TLRTFYEYWM (84 aa). In terms of domain architecture, Tyr recombinase spans 105-286; sequence YLPQFFYEEE…SNQQLRKVYL (182 aa). Active-site residues include R145, K169, H238, R241, and H264. Y273 (O-(3'-phospho-DNA)-tyrosine intermediate) is an active-site residue.

It belongs to the 'phage' integrase family. XerC subfamily. In terms of assembly, forms a cyclic heterotetrameric complex composed of two molecules of XerC and two molecules of XerD.

Its subcellular location is the cytoplasm. Site-specific tyrosine recombinase, which acts by catalyzing the cutting and rejoining of the recombining DNA molecules. The XerC-XerD complex is essential to convert dimers of the bacterial chromosome into monomers to permit their segregation at cell division. It also contributes to the segregational stability of plasmids. The protein is Tyrosine recombinase XerC of Staphylococcus aureus (strain Mu3 / ATCC 700698).